We begin with the raw amino-acid sequence, 354 residues long: Ferrochelatase (354 aa).

Fe cation contacts are provided by histidine 204 and glutamate 306.

It belongs to the ferrochelatase family.

It is found in the cytoplasm. The catalysed reaction is heme b + 2 H(+) = protoporphyrin IX + Fe(2+). It functions in the pathway porphyrin-containing compound metabolism; protoheme biosynthesis; protoheme from protoporphyrin-IX: step 1/1. In terms of biological role, catalyzes the ferrous insertion into protoporphyrin IX. This is Ferrochelatase from Coxiella burnetii (strain CbuK_Q154) (Coxiella burnetii (strain Q154)).